The following is a 219-amino-acid chain: Deoxyribose-phosphate aldolase 1 (219 aa).

D87 acts as the Proton donor/acceptor in catalysis. The active-site Schiff-base intermediate with acetaldehyde is K149. Residue K178 is the Proton donor/acceptor of the active site.

It belongs to the DeoC/FbaB aldolase family. DeoC type 1 subfamily.

It is found in the cytoplasm. It catalyses the reaction 2-deoxy-D-ribose 5-phosphate = D-glyceraldehyde 3-phosphate + acetaldehyde. Its pathway is carbohydrate degradation; 2-deoxy-D-ribose 1-phosphate degradation; D-glyceraldehyde 3-phosphate and acetaldehyde from 2-deoxy-alpha-D-ribose 1-phosphate: step 2/2. Catalyzes a reversible aldol reaction between acetaldehyde and D-glyceraldehyde 3-phosphate to generate 2-deoxy-D-ribose 5-phosphate. This is Deoxyribose-phosphate aldolase 1 from Vibrio vulnificus (strain YJ016).